A 617-amino-acid polypeptide reads, in one-letter code: 5-hydroxytryptamine receptor 2B (617 aa).

Residues 1–95 (MLKTVTTAMA…LLVKMIAMAV (95 aa)) lie on the Extracellular side of the membrane. N-linked (GlcNAc...) asparagine glycosylation is found at Asn-31, Asn-41, Asn-51, and Asn-58. Residues 96 to 116 (VLGLMILVTIIGNVFVIAAII) form a helical membrane-spanning segment. Topologically, residues 117–128 (LERNLQNVANYL) are cytoplasmic. The helical transmembrane segment at 129-149 (VASLAVADLFVACLVMPLGAV) threads the bilayer. Over 150 to 164 (YEISNGWILGPELCD) the chain is Extracellular. A disulfide bridge links Cys-163 with Cys-242. The chain crosses the membrane as a helical span at residues 165–185 (IWTSCDVLCCTASILHLVAIA). The Cytoplasmic portion of the chain corresponds to 186-205 (ADRYWTVTNIDYNNLRTPRR). The helical transmembrane segment at 206–226 (VFLMIFCVWFAALIVSLAPQF) threads the bilayer. The Extracellular segment spans residues 227-256 (GWKDPDYMKRIEEQHCMVSQDVGYQIFATC). The chain crosses the membrane as a helical span at residues 257-277 (CTFYVPLLVILFLYWKIYIIA). The Cytoplasmic portion of the chain corresponds to 278–534 (RKRIQRRAQK…EAKRERKAAQ (257 aa)). The segment at 309-336 (RSKRRAERKRLEAGERTPVDGDGTGGQL) is disordered. The segment covering 317 to 327 (KRLEAGERTPV) has biased composition (basic and acidic residues). The helical transmembrane segment at 535-555 (TLAIITGAFVICWLPFFVMAL) threads the bilayer. The Extracellular segment spans residues 556–570 (TMSLCKECEIHTAVA). A helical membrane pass occupies residues 571-591 (SLFLWLGYFNSTLNPVIYTIF). The Cytoplasmic portion of the chain corresponds to 592-617 (NPEFRRAFKRILFGRKAAARARSAKI).

It belongs to the G-protein coupled receptor 1 family.

The protein resides in the cell membrane. Functionally, this is one of the several different receptors for 5-hydroxytryptamine (serotonin), a biogenic hormone that functions as a neurotransmitter, a hormone, and a mitogen. The activity of this receptor is mediated by G proteins which inhibit adenylate cyclase. The chain is 5-hydroxytryptamine receptor 2B (5-HT1B) from Drosophila melanogaster (Fruit fly).